Here is a 566-residue protein sequence, read N- to C-terminus: DNA ligase B (566 aa).

Residue Lys-125 is the N6-AMP-lysine intermediate of the active site.

The protein belongs to the NAD-dependent DNA ligase family. LigB subfamily.

It catalyses the reaction NAD(+) + (deoxyribonucleotide)n-3'-hydroxyl + 5'-phospho-(deoxyribonucleotide)m = (deoxyribonucleotide)n+m + AMP + beta-nicotinamide D-nucleotide.. Catalyzes the formation of phosphodiester linkages between 5'-phosphoryl and 3'-hydroxyl groups in double-stranded DNA using NAD as a coenzyme and as the energy source for the reaction. The chain is DNA ligase B from Pseudomonas putida (strain ATCC 47054 / DSM 6125 / CFBP 8728 / NCIMB 11950 / KT2440).